Consider the following 192-residue polypeptide: UPF0312 protein Spro_1887 (192 aa).

The first 23 residues, 1-23 (MLKKTVLGLTAGAMLLSAGSALA), serve as a signal peptide directing secretion.

This sequence belongs to the UPF0312 family. Type 1 subfamily.

The protein resides in the periplasm. In Serratia proteamaculans (strain 568), this protein is UPF0312 protein Spro_1887.